Here is a 215-residue protein sequence, read N- to C-terminus: Protein ERP2 (215 aa).

A signal peptide spans 1 to 25 (MIKSTIALPSFFIVLILALVNSVAA). Residues 26 to 182 (SSSYAPVAIS…TVNSTESRLT (157 aa)) lie on the Lumenal side of the membrane. The 83-residue stretch at 41-123 (KECLYYDMVT…LKKVEITLEK (83 aa)) folds into the GOLD domain. The helical transmembrane segment at 183-203 (WLSILIIIIIAVISIAQVLLI) threads the bilayer. The Cytoplasmic segment spans residues 204–215 (QFLFTGRQKNYV).

Belongs to the EMP24/GP25L family. As to quaternary structure, associates with EMP24, ERV25 and ERP1.

It is found in the endoplasmic reticulum membrane. In terms of biological role, involved in vesicular protein trafficking. The sequence is that of Protein ERP2 (ERP2) from Saccharomyces cerevisiae (strain ATCC 204508 / S288c) (Baker's yeast).